Reading from the N-terminus, the 259-residue chain is Protein FAM220A (259 aa).

The tract at residues 29–66 is disordered; it reads GLKRRSEKRNPSPSDVPSWTDQPVADTHGKSRAMAAAS. The span at 39-49 shows a compositional bias: polar residues; sequence PSPSDVPSWTD.

In terms of assembly, interacts with transcriptional activator STAT3; the interaction occurs in both the nucleus and the cytoplasm, is enhanced by IL6 and promotes STAT3 dephosphorylation, leading to negative regulation of STAT3 transcriptional activator activity. Can interact with both unphosphorylated and phosphorylated STAT3 but interacts preferentially with phosphorylated STAT3 in the nucleus. Interacts with protein phosphatase PTPN2/TC45; this promotes interaction of PTPN2 with STAT3, leading to dephosphorylation of STAT3 by PTPN2.

It is found in the nucleus. Its subcellular location is the cytoplasm. It localises to the cytoplasmic vesicle. The protein localises to the secretory vesicle. The protein resides in the acrosome. Functionally, promotes dephosphorylation of transcriptional activator STAT3 by interacting with both STAT3 and protein phosphatase PTPN2. This promotes interaction of PTPN2 with STAT3 and mediates STAT3 dephosphorylation by PTPN2, leading to negative regulation of STAT3 transcriptional activator activity. May be required for spermiogenesis or sperm function. The polypeptide is Protein FAM220A (Fam220a) (Rattus norvegicus (Rat)).